Reading from the N-terminus, the 65-residue chain is Small, acid-soluble spore protein H 1 (65 aa).

Belongs to the SspH family.

The protein localises to the spore core. This Clostridium botulinum (strain Langeland / NCTC 10281 / Type F) protein is Small, acid-soluble spore protein H 1.